A 264-amino-acid chain; its full sequence is Transmembrane protein 270 (264 aa).

Transmembrane regions (helical) follow at residues 31–51 (HLYR…LGLA), 74–94 (LSLA…LLLW), and 133–153 (LFLS…LLTW). Over residues 227-236 (AQEVKSQETS) the composition is skewed to polar residues. The tract at residues 227–264 (AQEVKSQETSGPPPQFLIPESSTTESGPLPPQPETPGE) is disordered. Residues 254 to 264 (PLPPQPETPGE) show a composition bias toward pro residues.

As to expression, testis.

It is found in the membrane. In Mus musculus (Mouse), this protein is Transmembrane protein 270.